Here is a 232-residue protein sequence, read N- to C-terminus: NAD(P)H-quinone oxidoreductase subunit K 1 (232 aa).

[4Fe-4S] cluster-binding residues include Cys-49, Cys-50, Cys-114, and Cys-145.

The protein belongs to the complex I 20 kDa subunit family. As to quaternary structure, NDH-1 can be composed of about 15 different subunits; different subcomplexes with different compositions have been identified which probably have different functions. The cofactor is [4Fe-4S] cluster.

It localises to the cellular thylakoid membrane. It carries out the reaction a plastoquinone + NADH + (n+1) H(+)(in) = a plastoquinol + NAD(+) + n H(+)(out). The catalysed reaction is a plastoquinone + NADPH + (n+1) H(+)(in) = a plastoquinol + NADP(+) + n H(+)(out). Functionally, NDH-1 shuttles electrons from an unknown electron donor, via FMN and iron-sulfur (Fe-S) centers, to quinones in the respiratory and/or the photosynthetic chain. The immediate electron acceptor for the enzyme in this species is believed to be plastoquinone. Couples the redox reaction to proton translocation, and thus conserves the redox energy in a proton gradient. Cyanobacterial NDH-1 also plays a role in inorganic carbon-concentration. This Acaryochloris marina (strain MBIC 11017) protein is NAD(P)H-quinone oxidoreductase subunit K 1.